Reading from the N-terminus, the 691-residue chain is Elongation factor G (691 aa).

The region spanning 8–283 (EKQRNIGIMA…AVVQYLPSPL (276 aa)) is the tr-type G domain. Residues 17–24 (AHIDAGKT), 81–85 (DTPGH), and 135–138 (NKMD) contribute to the GTP site.

The protein belongs to the TRAFAC class translation factor GTPase superfamily. Classic translation factor GTPase family. EF-G/EF-2 subfamily.

Its subcellular location is the cytoplasm. Its function is as follows. Catalyzes the GTP-dependent ribosomal translocation step during translation elongation. During this step, the ribosome changes from the pre-translocational (PRE) to the post-translocational (POST) state as the newly formed A-site-bound peptidyl-tRNA and P-site-bound deacylated tRNA move to the P and E sites, respectively. Catalyzes the coordinated movement of the two tRNA molecules, the mRNA and conformational changes in the ribosome. The protein is Elongation factor G of Lawsonia intracellularis (strain PHE/MN1-00).